A 219-amino-acid chain; its full sequence is Redox-sensing transcriptional repressor Rex (219 aa).

The H-T-H motif DNA-binding region spans L18–F57. G92–G97 provides a ligand contact to NAD(+).

Belongs to the transcriptional regulatory Rex family. In terms of assembly, homodimer.

The protein resides in the cytoplasm. Functionally, modulates transcription in response to changes in cellular NADH/NAD(+) redox state. The chain is Redox-sensing transcriptional repressor Rex from Exiguobacterium sibiricum (strain DSM 17290 / CCUG 55495 / CIP 109462 / JCM 13490 / 255-15).